The chain runs to 306 residues: tRNA pseudouridine synthase B (306 aa).

The active-site Nucleophile is Asp-47.

This sequence belongs to the pseudouridine synthase TruB family. Type 1 subfamily.

The enzyme catalyses uridine(55) in tRNA = pseudouridine(55) in tRNA. Its function is as follows. Responsible for synthesis of pseudouridine from uracil-55 in the psi GC loop of transfer RNAs. This Neisseria meningitidis serogroup A / serotype 4A (strain DSM 15465 / Z2491) protein is tRNA pseudouridine synthase B.